A 268-amino-acid polypeptide reads, in one-letter code: TodF product hydratase (268 aa).

This sequence belongs to the hydratase/decarboxylase family.

The protein operates within xenobiotic degradation; toluene degradation. Functionally, converts the product of 2-hydroxy-6-oxo-2,4-heptadienoate hydrolase. In Pseudomonas putida (strain ATCC 700007 / DSM 6899 / JCM 31910 / BCRC 17059 / LMG 24140 / F1), this protein is TodF product hydratase (todJ).